The chain runs to 526 residues: Seipin-2 (526 aa).

Positions 33–77 (PIRSNSHQPSSLLRRRKSAHRRDLISSDIETEPSSSSDGFDVGEK) are disordered. The segment covering 58–70 (SSDIETEPSSSSD) has biased composition (low complexity). 4 helical membrane passes run 195–215 (SLLTFPPWLLRNCFLFFFDPF), 224–243 (FLMARVAGISDMIFGYMNPF), 258–278 (FGWGMFWAVYVGIVLFGLLVS), and 483–503 (LFVWISMSLFITELLFTLVCC).

The protein belongs to the seipin family. Expressed in seeds, seedlings, leaves, stems and roots. Not detected in flowers.

The protein resides in the endoplasmic reticulum membrane. Its function is as follows. Involved in lipid metabolism and lipid droplet (LD) morphology, number, and size. Supports the formation of small-sized LDs and modulates triacylglycerol accumulation. Induces probably a reorganization of the endoplasmic reticulum into LD-forming domains. This is Seipin-2 from Arabidopsis thaliana (Mouse-ear cress).